Reading from the N-terminus, the 327-residue chain is Phenylalanine--tRNA ligase alpha subunit (327 aa).

Residue Glu252 participates in Mg(2+) binding.

It belongs to the class-II aminoacyl-tRNA synthetase family. Phe-tRNA synthetase alpha subunit type 1 subfamily. Tetramer of two alpha and two beta subunits. Requires Mg(2+) as cofactor.

The protein resides in the cytoplasm. It carries out the reaction tRNA(Phe) + L-phenylalanine + ATP = L-phenylalanyl-tRNA(Phe) + AMP + diphosphate + H(+). The chain is Phenylalanine--tRNA ligase alpha subunit from Shewanella frigidimarina (strain NCIMB 400).